Consider the following 427-residue polypeptide: Probable G-protein coupled receptor 150 (427 aa).

At 1-3 (MED) the chain is on the extracellular side. The chain crosses the membrane as a helical span at residues 4-24 (PFSLAILNPASNLSVPTQPSW). At 25 to 50 (SLNLTSEQGASVPGPHSPPRGPPSHR) the chain is on the cytoplasmic side. A helical transmembrane segment spans residues 51–71 (IHLVFLGIILVAAVAGNTTVL). Over 72 to 89 (CRLCGGSSGPWPGPKRRK) the chain is Extracellular. A helical membrane pass occupies residues 90–110 (MDFLLVQLAAADLYASGGTAL). The Cytoplasmic segment spans residues 111–170 (SQLAWELLGDPRPALGDLACRLSHLLQASGRGASAHLVALIALERQLAVRIPQGPQLPAR). A helical transmembrane segment spans residues 171-191 (ALAALSWLLALLLALPPTFVV). Residues 192–230 (RWDAPPSSTANAWPGKHCCRGIFAPLPRWHLQVYALYEA) are Extracellular-facing. A helical membrane pass occupies residues 231-251 (IVGFAAPVALLGFSCGHLLCV). The Cytoplasmic portion of the chain corresponds to 252 to 286 (WWQRGSQAPVARMPWSPSMARASLPSALPQAKVQS). The chain crosses the membrane as a helical span at residues 287-307 (LKMSLALALLFVGCDLPYFAA). Over 308–327 (RLAAAWSSKPAGDWERESLV) the chain is Extracellular. The chain crosses the membrane as a helical span at residues 328–348 (AAMRVLEVANSAINPLIYLFF). The Cytoplasmic segment spans residues 349–427 (QAGDCRLWRR…PPPCSCESAF (79 aa)). The tract at residues 402-427 (EERNQGCLRPPPPRPRPPPCSCESAF) is disordered. Pro residues predominate over residues 410-421 (RPPPPRPRPPPC).

This sequence belongs to the G-protein coupled receptor 1 family.

The protein localises to the cell membrane. Orphan receptor. The chain is Probable G-protein coupled receptor 150 (Gpr150) from Mus musculus (Mouse).